A 526-amino-acid polypeptide reads, in one-letter code: ATP synthase subunit alpha (526 aa).

171-178 is an ATP binding site; it reads GDRQTGKT.

The protein belongs to the ATPase alpha/beta chains family. F-type ATPases have 2 components, CF(1) - the catalytic core - and CF(0) - the membrane proton channel. CF(1) has five subunits: alpha(3), beta(3), gamma(1), delta(1), epsilon(1). CF(0) has four main subunits: a(1), b(1), b'(1) and c(9-12).

The protein localises to the cell inner membrane. It catalyses the reaction ATP + H2O + 4 H(+)(in) = ADP + phosphate + 5 H(+)(out). Produces ATP from ADP in the presence of a proton gradient across the membrane. The alpha chain is a regulatory subunit. This chain is ATP synthase subunit alpha, found in Chlorobium phaeobacteroides (strain DSM 266 / SMG 266 / 2430).